Here is a 257-residue protein sequence, read N- to C-terminus: Imidazole glycerol phosphate synthase subunit HisF (257 aa).

Catalysis depends on residues Asp-11 and Asp-130.

It belongs to the HisA/HisF family. In terms of assembly, heterodimer of HisH and HisF.

Its subcellular location is the cytoplasm. The enzyme catalyses 5-[(5-phospho-1-deoxy-D-ribulos-1-ylimino)methylamino]-1-(5-phospho-beta-D-ribosyl)imidazole-4-carboxamide + L-glutamine = D-erythro-1-(imidazol-4-yl)glycerol 3-phosphate + 5-amino-1-(5-phospho-beta-D-ribosyl)imidazole-4-carboxamide + L-glutamate + H(+). It participates in amino-acid biosynthesis; L-histidine biosynthesis; L-histidine from 5-phospho-alpha-D-ribose 1-diphosphate: step 5/9. Its function is as follows. IGPS catalyzes the conversion of PRFAR and glutamine to IGP, AICAR and glutamate. The HisF subunit catalyzes the cyclization activity that produces IGP and AICAR from PRFAR using the ammonia provided by the HisH subunit. This chain is Imidazole glycerol phosphate synthase subunit HisF, found in Prochlorococcus marinus (strain MIT 9515).